Consider the following 344-residue polypeptide: DNA-directed RNA polymerase subunit alpha (344 aa).

Positions M1–E246 are alpha N-terminal domain (alpha-NTD). The segment at E259–E344 is alpha C-terminal domain (alpha-CTD).

Belongs to the RNA polymerase alpha chain family. Homodimer. The RNAP catalytic core consists of 2 alpha, 1 beta, 1 beta' and 1 omega subunit. When a sigma factor is associated with the core the holoenzyme is formed, which can initiate transcription.

It carries out the reaction RNA(n) + a ribonucleoside 5'-triphosphate = RNA(n+1) + diphosphate. Its function is as follows. DNA-dependent RNA polymerase catalyzes the transcription of DNA into RNA using the four ribonucleoside triphosphates as substrates. This chain is DNA-directed RNA polymerase subunit alpha, found in Borreliella burgdorferi (strain ATCC 35210 / DSM 4680 / CIP 102532 / B31) (Borrelia burgdorferi).